Here is a 202-residue protein sequence, read N- to C-terminus: Holliday junction branch migration complex subunit RuvA (202 aa).

The interval 1 to 63 (MIAFLSGRVV…EDSLTLFGFA (63 aa)) is domain I. The domain II stretch occupies residues 64-142 (DDDERDTFER…EPGGDTAATP (79 aa)). The segment at 143–152 (EQSAAAAPRN) is flexible linker. The interval 152 to 202 (NWRAQVVSGLVNLGWSTREAEAAADAVAAEAGEQPDVAALLRSALRRLSRA) is domain III.

Belongs to the RuvA family. In terms of assembly, homotetramer. Forms an RuvA(8)-RuvB(12)-Holliday junction (HJ) complex. HJ DNA is sandwiched between 2 RuvA tetramers; dsDNA enters through RuvA and exits via RuvB. An RuvB hexamer assembles on each DNA strand where it exits the tetramer. Each RuvB hexamer is contacted by two RuvA subunits (via domain III) on 2 adjacent RuvB subunits; this complex drives branch migration. In the full resolvosome a probable DNA-RuvA(4)-RuvB(12)-RuvC(2) complex forms which resolves the HJ.

It localises to the cytoplasm. Its function is as follows. The RuvA-RuvB-RuvC complex processes Holliday junction (HJ) DNA during genetic recombination and DNA repair, while the RuvA-RuvB complex plays an important role in the rescue of blocked DNA replication forks via replication fork reversal (RFR). RuvA specifically binds to HJ cruciform DNA, conferring on it an open structure. The RuvB hexamer acts as an ATP-dependent pump, pulling dsDNA into and through the RuvAB complex. HJ branch migration allows RuvC to scan DNA until it finds its consensus sequence, where it cleaves and resolves the cruciform DNA. In Thermobifida fusca (strain YX), this protein is Holliday junction branch migration complex subunit RuvA.